An 81-amino-acid polypeptide reads, in one-letter code: Weak neurotoxin OH-72 (81 aa).

The first 16 residues, Leu1 to Thr16, serve as a signal peptide directing secretion. Disulfide bonds link Cys19/Cys40, Cys22/Cys27, Cys33/Cys58, Cys62/Cys73, and Cys74/Cys79.

It belongs to the three-finger toxin family. Ancestral subfamily. Orphan group II sub-subfamily. As to expression, expressed by the venom gland.

The protein localises to the secreted. In terms of biological role, binds with low affinity to muscular (alpha-1-beta-1-delta-epsilon/CHRNA1-CHRNB1-CHRND-CHRNE) and very low affinity to neuronal (alpha-7/CHRNA7) nicotinic acetylcholine receptor (nAChR). This Ophiophagus hannah (King cobra) protein is Weak neurotoxin OH-72.